Consider the following 310-residue polypeptide: D-apiose import binding protein (310 aa).

Residues Met-1–Ala-21 form the signal peptide. Residues Asn-35, Asp-111–Arg-112, Asp-158–Asn-160, Arg-164, Asn-214, Asp-239, and Gln-260 contribute to the D-apiofuranose site.

Belongs to the bacterial solute-binding protein 2 family.

Its subcellular location is the periplasm. In terms of biological role, part of an ABC transporter complex involved in D-apiose import. Binds D-apiose, D-ribose and D-ribulose. The polypeptide is D-apiose import binding protein (Actinobacillus succinogenes (strain ATCC 55618 / DSM 22257 / CCUG 43843 / 130Z)).